Reading from the N-terminus, the 1208-residue chain is DNA-directed RNA polymerase subunit beta (1208 aa).

The protein belongs to the RNA polymerase beta chain family. In terms of assembly, the RNAP catalytic core consists of 2 alpha, 1 beta, 1 beta' and 1 omega subunit. When a sigma factor is associated with the core the holoenzyme is formed, which can initiate transcription.

It catalyses the reaction RNA(n) + a ribonucleoside 5'-triphosphate = RNA(n+1) + diphosphate. In terms of biological role, DNA-dependent RNA polymerase catalyzes the transcription of DNA into RNA using the four ribonucleoside triphosphates as substrates. The sequence is that of DNA-directed RNA polymerase subunit beta from Enterococcus faecium (Streptococcus faecium).